The primary structure comprises 241 residues: Phosphatidylcholine synthase (241 aa).

Topologically, residues 1–15 (MKIFNYKRVPYAEIR) are cytoplasmic. Residues 16 to 36 (AFSVHILTASGSFLAFLGVVA) traverse the membrane as a helical segment. The Periplasmic portion of the chain corresponds to 37 to 41 (ASEHR). A helical transmembrane segment spans residues 42–62 (FVDMFWWLGLALLVDGIDGPI). The Cytoplasmic portion of the chain corresponds to 63–76 (ARKVRVKEVLPNWS). Residues 77 to 97 (GDTLDNIIDYVTYVLLPAFAL) traverse the membrane as a helical segment. At 98–100 (YQS) the chain is on the periplasmic side. The chain crosses the membrane as a helical span at residues 101–121 (GMIGEPLSFVAAGMIVVSSAI). Residues 122-133 (YYADMGMKTDEY) lie on the Cytoplasmic side of the membrane. Residues 134 to 154 (FFSGFPVVWNMVVFTLFVMDA) form a helical membrane-spanning segment. The Periplasmic segment spans residues 155–159 (SATTA). The helical transmembrane segment at 160-180 (MTVVTVSVFLTFLPINFLHPV) threads the bilayer. Over 181–187 (RVKRLRP) the chain is Cytoplasmic. The helical transmembrane segment at 188–208 (LNLLVVAIWCALGGYALLMHF) threads the bilayer. Over 209–214 (ETPTWA) the chain is Periplasmic. A helical membrane pass occupies residues 215–235 (VIAFVASGIYLYCIGGILQFF). The Cytoplasmic segment spans residues 236 to 241 (PSLGAK).

Belongs to the CDP-alcohol phosphatidyltransferase class-I family. Requires Mn(2+) as cofactor.

It is found in the cell inner membrane. The catalysed reaction is a CDP-1,2-diacyl-sn-glycerol + choline = a 1,2-diacyl-sn-glycero-3-phosphocholine + CMP + H(+). Functionally, condenses choline with CDP-diglyceride to produce phosphatidylcholine and CMP. Affects motility, biofilm formation and virulence of this bacterium when there is a complete loss of phosphatidylcholine formation due to absence of both the synthase (pcs) and the methylation (pmtA) pathways. In Agrobacterium fabrum (strain C58 / ATCC 33970) (Agrobacterium tumefaciens (strain C58)), this protein is Phosphatidylcholine synthase.